We begin with the raw amino-acid sequence, 266 residues long: Type III pantothenate kinase (266 aa).

9–16 (DAGNSRIK) is an ATP binding site. Substrate-binding positions include Y96 and 103 to 106 (GSDR). D105 acts as the Proton acceptor in catalysis. T129 contacts ATP. T189 serves as a coordination point for substrate.

It belongs to the type III pantothenate kinase family. Homodimer. NH4(+) is required as a cofactor. It depends on K(+) as a cofactor.

The protein resides in the cytoplasm. The catalysed reaction is (R)-pantothenate + ATP = (R)-4'-phosphopantothenate + ADP + H(+). The protein operates within cofactor biosynthesis; coenzyme A biosynthesis; CoA from (R)-pantothenate: step 1/5. Catalyzes the phosphorylation of pantothenate (Pan), the first step in CoA biosynthesis. This is Type III pantothenate kinase from Burkholderia lata (strain ATCC 17760 / DSM 23089 / LMG 22485 / NCIMB 9086 / R18194 / 383).